Consider the following 208-residue polypeptide: Pyridoxal 5'-phosphate synthase subunit PdxT (208 aa).

Position 46-48 (46-48 (GES)) interacts with L-glutamine. The active-site Nucleophile is the Cys-78. Residues Arg-105 and 156–157 (IR) each bind L-glutamine. Active-site charge relay system residues include His-192 and Glu-194.

It belongs to the glutaminase PdxT/SNO family. In terms of assembly, in the presence of PdxS, forms a dodecamer of heterodimers. Only shows activity in the heterodimer.

It catalyses the reaction aldehydo-D-ribose 5-phosphate + D-glyceraldehyde 3-phosphate + L-glutamine = pyridoxal 5'-phosphate + L-glutamate + phosphate + 3 H2O + H(+). It carries out the reaction L-glutamine + H2O = L-glutamate + NH4(+). It functions in the pathway cofactor biosynthesis; pyridoxal 5'-phosphate biosynthesis. In terms of biological role, catalyzes the hydrolysis of glutamine to glutamate and ammonia as part of the biosynthesis of pyridoxal 5'-phosphate. The resulting ammonia molecule is channeled to the active site of PdxS. The chain is Pyridoxal 5'-phosphate synthase subunit PdxT from Bifidobacterium adolescentis (strain ATCC 15703 / DSM 20083 / NCTC 11814 / E194a).